The following is a 168-amino-acid chain: Transcriptional repressor NrdR (168 aa).

A zinc finger spans residues 3–34 (CPFCQDAENKVIDSRESHEGSVIRRRRECLTC). The ATP-cone domain maps to 49 to 139 (PLIVKKDGRR…VYRSFRDIAE (91 aa)).

It belongs to the NrdR family. The cofactor is Zn(2+).

Its function is as follows. Negatively regulates transcription of bacterial ribonucleotide reductase nrd genes and operons by binding to NrdR-boxes. This chain is Transcriptional repressor NrdR, found in Myxococcus xanthus (strain DK1622).